We begin with the raw amino-acid sequence, 244 residues long: tRNA1(Val) (adenine(37)-N6)-methyltransferase (244 aa).

This sequence belongs to the methyltransferase superfamily. tRNA (adenine-N(6)-)-methyltransferase family.

Its subcellular location is the cytoplasm. The enzyme catalyses adenosine(37) in tRNA1(Val) + S-adenosyl-L-methionine = N(6)-methyladenosine(37) in tRNA1(Val) + S-adenosyl-L-homocysteine + H(+). In terms of biological role, specifically methylates the adenine in position 37 of tRNA(1)(Val) (anticodon cmo5UAC). The sequence is that of tRNA1(Val) (adenine(37)-N6)-methyltransferase from Shewanella sediminis (strain HAW-EB3).